A 981-amino-acid polypeptide reads, in one-letter code: Helicase-like transcription factor CHR28 (981 aa).

2 disordered regions span residues 1-66 (MDSA…LDSR) and 112-194 (KRTH…RNSE). Residues 46–65 (SGSSSGANGHTKTGLTNLDS) are compositionally biased toward polar residues. Pro residues predominate over residues 119 to 128 (FSRPPFPPRP). Residues 166 to 176 (HGTSASPSHFN) are compositionally biased toward polar residues. The span at 181–194 (PMHRNGIGEERNSE) shows a compositional bias: basic and acidic residues. One can recognise a Helicase ATP-binding domain in the interval 241–526 (ETNSLHCMGG…YSYFRFLKYD (286 aa)). An ATP-binding site is contributed by 254-261 (DDQGLGKT). Disordered regions lie at residues 293–337 (DADD…RKFN) and 439–462 (VVGTTKKSKKKKGNNNAGDSSDPD). Basic residues predominate over residues 439–451 (VVGTTKKSKKKKG). The RING-type; degenerate zinc-finger motif lies at 679-718 (CCVCHDPPEDPVVTLCGHIFCYQCVSDYITGDEDTCPAPR). Residues 779–798 (NQGTSNSTQNGQMASSSQQP) are compositionally biased toward polar residues. Positions 779–808 (NQGTSNSTQNGQMASSSQQPNDDDDDDDDD) are disordered. A compositionally biased stretch (acidic residues) spans 799-808 (NDDDDDDDDD). The region spanning 804–976 (DDDDDVTIVE…ATRLTVDDLK (173 aa)) is the Helicase C-terminal domain.

This sequence belongs to the SNF2/RAD54 helicase family. RAD16 subfamily. Interacts with SUVR2.

The protein localises to the nucleus. In terms of biological role, probable helicase-like transcription factor involved in transcriptional gene silencing. Associates with SUVR2 and contributes to transcriptional gene silencing at RNA-directed DNA methylation (RdDM) target loci but also at RdDM-independent target loci. May be involved in nucleosome positioning to form ordered nucleosome arrays on chromatin. Associates with SUVR2 and functions redundantly with FRG1. Required for the efficient methylation of a broad range of RdDM target loci. The polypeptide is Helicase-like transcription factor CHR28 (Arabidopsis thaliana (Mouse-ear cress)).